A 218-amino-acid chain; its full sequence is GCN5-related N-acetyltransferase 9 (218 aa).

Positions 36–183 (SALLEATGSE…KEVTLEYPVT (148 aa)) constitute an N-acetyltransferase domain. Residues 112–114 (MIA), 120–125 (GKGLGK), 152–154 (NTA), and Phe-159 each bind acetyl-CoA.

This sequence belongs to the acetyltransferase family. GNAT subfamily. As to quaternary structure, oligomer. Expressed throughout the plant.

The protein localises to the cytoplasm. It is found in the nucleus. The catalysed reaction is an N-terminal L-alpha-aminoacyl-[protein] + acetyl-CoA = N-terminal N(alpha)-acetyl-L-alpha-aminoacyl-[protein] + CoA + H(+). It catalyses the reaction L-lysyl-[protein] + acetyl-CoA = N(6)-acetyl-L-lysyl-[protein] + CoA + H(+). Its function is as follows. Probable protein acetyltransferase with dual specificity triggering both N-alpha-acetylation (NTA) and epsilon-lysine acetylation (KA). This Arabidopsis thaliana (Mouse-ear cress) protein is GCN5-related N-acetyltransferase 9.